The primary structure comprises 137 residues: ATP synthase epsilon chain (137 aa).

This sequence belongs to the ATPase epsilon chain family. In terms of assembly, F-type ATPases have 2 components, CF(1) - the catalytic core - and CF(0) - the membrane proton channel. CF(1) has five subunits: alpha(3), beta(3), gamma(1), delta(1), epsilon(1). CF(0) has three main subunits: a, b and c.

It localises to the cell membrane. Produces ATP from ADP in the presence of a proton gradient across the membrane. The polypeptide is ATP synthase epsilon chain (Caldicellulosiruptor saccharolyticus (strain ATCC 43494 / DSM 8903 / Tp8T 6331)).